Reading from the N-terminus, the 80-residue chain is Exodeoxyribonuclease 7 small subunit (80 aa).

It belongs to the XseB family. In terms of assembly, heterooligomer composed of large and small subunits.

The protein resides in the cytoplasm. It carries out the reaction Exonucleolytic cleavage in either 5'- to 3'- or 3'- to 5'-direction to yield nucleoside 5'-phosphates.. Functionally, bidirectionally degrades single-stranded DNA into large acid-insoluble oligonucleotides, which are then degraded further into small acid-soluble oligonucleotides. The sequence is that of Exodeoxyribonuclease 7 small subunit from Rickettsia conorii (strain ATCC VR-613 / Malish 7).